The following is a 223-amino-acid chain: Probable cytokinin riboside 5'-monophosphate phosphoribohydrolase LOGL1 (223 aa).

Substrate is bound by residues glutamate 89, 107-108 (RK), 124-130 (GYGTMEE), and threonine 136. Residues 201–223 (QEVAPRTSWEMSELGYGKTPEES) are disordered.

The protein belongs to the LOG family. As to expression, expressed in shoot apex, immature inflorescences and flowers.

It carries out the reaction N(6)-(dimethylallyl)adenosine 5'-phosphate + H2O = N(6)-dimethylallyladenine + D-ribose 5-phosphate. The catalysed reaction is 9-ribosyl-trans-zeatin 5'-phosphate + H2O = trans-zeatin + D-ribose 5-phosphate. Its function is as follows. Cytokinin-activating enzyme working in the direct activation pathway. Phosphoribohydrolase that converts inactive cytokinin nucleotides to the biologically active free-base forms. The sequence is that of Probable cytokinin riboside 5'-monophosphate phosphoribohydrolase LOGL1 (LOGL1) from Oryza sativa subsp. japonica (Rice).